The sequence spans 421 residues: NAD-specific glutamate dehydrogenase (421 aa).

The substrate site is built by Lys70 and Lys94. Residue Lys106 is the Proton donor of the active site. NAD(+)-binding residues include Thr191 and Asn222. Ser355 lines the substrate pocket.

Belongs to the Glu/Leu/Phe/Val dehydrogenases family. In terms of assembly, homohexamer.

It catalyses the reaction L-glutamate + NAD(+) + H2O = 2-oxoglutarate + NH4(+) + NADH + H(+). It participates in amino-acid degradation; L-glutamate degradation via hydroxyglutarate pathway; crotonoyl-CoA from L-glutamate: step 1/5. In Peptoniphilus asaccharolyticus (Peptostreptococcus asaccharolyticus), this protein is NAD-specific glutamate dehydrogenase.